A 77-amino-acid polypeptide reads, in one-letter code: Coiled-coil-helix-coiled-coil-helix domain-containing protein C550.01c (77 aa).

One can recognise a CHCH domain in the interval 24-65 (KGGCVEEHLRLNDCYWDTHDWRKCTEQMEEFRKCWEKRHGPL). Short sequence motifs (cx9C motif) lie at residues 27 to 37 (CVEEHLRLNDC) and 47 to 57 (CTEQMEEFRKC). 2 disulfide bridges follow: cysteine 27-cysteine 57 and cysteine 37-cysteine 47.

It localises to the cytoplasm. The protein resides in the nucleus. The polypeptide is Coiled-coil-helix-coiled-coil-helix domain-containing protein C550.01c (Schizosaccharomyces pombe (strain 972 / ATCC 24843) (Fission yeast)).